The chain runs to 182 residues: Large ribosomal subunit protein uL6 (182 aa).

This sequence belongs to the universal ribosomal protein uL6 family. As to quaternary structure, part of the 50S ribosomal subunit.

Its function is as follows. This protein binds to the 23S rRNA, and is important in its secondary structure. It is located near the subunit interface in the base of the L7/L12 stalk, and near the tRNA binding site of the peptidyltransferase center. The polypeptide is Large ribosomal subunit protein uL6 (Dehalococcoides mccartyi (strain ATCC BAA-2266 / KCTC 15142 / 195) (Dehalococcoides ethenogenes (strain 195))).